Here is an 87-residue protein sequence, read N- to C-terminus: Spore morphogenesis and germination protein YwcE (87 aa).

3 consecutive transmembrane segments (helical) span residues 1–21 (MMDMFFAYLLVASATPLFIWL), 26–46 (VALSAIPPIILMWVFFFFYAT), and 56–76 (LMIILFAVNVIVAHIAAFIIY).

This sequence belongs to the YwcE family.

The protein localises to the cell membrane. It localises to the spore membrane. Its subcellular location is the spore outer membrane. Its function is as follows. Required for proper spore morphogenesis. Important for spore germination. The polypeptide is Spore morphogenesis and germination protein YwcE (ywcE) (Bacillus subtilis (strain 168)).